Here is a 234-residue protein sequence, read N- to C-terminus: Ubiquitin domain-containing protein 2 (234 aa).

The segment at 1-46 (MGGCVGAQHDSSGSLNENSEGTGVALGRNQPLKKEKPKWKSDYPMT) is disordered. Polar residues predominate over residues 9-21 (HDSSGSLNENSEG). A compositionally biased stretch (basic and acidic residues) spans 32 to 41 (LKKEKPKWKS). In terms of domain architecture, Ubiquitin-like spans 152–227 (SQLRLRLSTG…VQVIMSQPLQ (76 aa)).

Its subcellular location is the cytoplasm. The protein is Ubiquitin domain-containing protein 2 (UBTD2) of Bos taurus (Bovine).